Reading from the N-terminus, the 168-residue chain is Small ribosomal subunit protein uS5c (168 aa).

One can recognise an S5 DRBM domain in the interval 17–80 (WQERVVQIRR…SDGKKKIVSV (64 aa)).

Belongs to the universal ribosomal protein uS5 family. In terms of assembly, part of the 30S ribosomal subunit. Contacts protein S4.

It is found in the plastid. The protein localises to the chloroplast. Its function is as follows. With S4 and S12 plays an important role in translational accuracy. The sequence is that of Small ribosomal subunit protein uS5c (rps5) from Rhodomonas salina (Cryptomonas salina).